Consider the following 652-residue polypeptide: Aspartate--tRNA ligase, mitochondrial (652 aa).

Residues 1-46 (MYLGSWLNRLGRGLSRPIGKTKQPIWGSLSRSLTLSSQRVPEFSSF) constitute a mitochondrion transit peptide. T218 is modified (phosphothreonine). Position 241 is a phosphoserine (S241). The tract at residues 243 to 246 (QQFK) is aspartate. Residue R265 participates in L-aspartate binding. Residues 265–267 (RDE) and E534 each bind ATP. R541 contributes to the L-aspartate binding site. 583–586 (GLDR) provides a ligand contact to ATP.

Belongs to the class-II aminoacyl-tRNA synthetase family. Type 1 subfamily. In terms of assembly, homodimer.

It is found in the mitochondrion matrix. Its subcellular location is the mitochondrion membrane. It carries out the reaction tRNA(Asp) + L-aspartate + ATP = L-aspartyl-tRNA(Asp) + AMP + diphosphate. Its function is as follows. Catalyzes the attachment of aspartate to tRNA(Asp) in a two-step reaction: aspartate is first activated by ATP to form Asp-AMP and then transferred to the acceptor end of tRNA(Asp). The sequence is that of Aspartate--tRNA ligase, mitochondrial (Dars2) from Rattus norvegicus (Rat).